The following is a 341-amino-acid chain: GDT1-like protein 1, chloroplastic (341 aa).

Residues 1-13 (MASVASSTVFASS) show a composition bias toward low complexity. Disordered regions lie at residues 1–41 (MASV…GRSV) and 54–76 (VVTRASDEEGPPEPAGQGRGGGR). Residues 1–57 (MASVASSTVFASSLPHHRATTRAPPTPPRIPRRARLPGRSVVSCLPKRGSEKLVVTR) constitute a chloroplast transit peptide. The next 7 membrane-spanning stretches (helical) occupy residues 79–99 (PSLDASSCGLALAAAAGVLML), 117–137 (VVGDLGDISTGFASAFLLIFF), 158–178 (AIIFLGTFGALAVMTIISVVL), 203–223 (FLAACLLVYYGITTLLDAASG), 246–266 (GAGIISAASTIASTFVLVFIA), 286–306 (LGVIAGSLAGHAVATLIAVLG), and 318–338 (IVAYIGGSLFLAFAAVTLVEI).

It belongs to the GDT1 family.

It localises to the plastid. The protein resides in the chloroplast membrane. The protein is GDT1-like protein 1, chloroplastic of Oryza sativa subsp. japonica (Rice).